A 76-amino-acid polypeptide reads, in one-letter code: Conotoxin TxMEKL-011 (76 aa).

The first 19 residues, 1–19 (MEKLTILLLVAAVLMSTQA), serve as a signal peptide directing secretion. The propeptide occupies 20 to 45 (LVERAGENRSKENIKFLLKRKRAADR). Cystine bridges form between Cys51–Cys65, Cys58–Cys69, and Cys64–Cys73.

The protein belongs to the conotoxin O2 superfamily. Expressed by the venom duct.

Its subcellular location is the secreted. This chain is Conotoxin TxMEKL-011, found in Conus textile (Cloth-of-gold cone).